Reading from the N-terminus, the 508-residue chain is MADGQVAELLLRRLEASDGGLDSAELAAELGMEHQAVVGAVKSLQALGEVIEAELRSTKHWELTAEGEEIAREGSHEARVFRSIPPEGLAQSELMRLPSGKVGFSKAMSNKWIRVDKSAADGPRVFRVVDSMEDEVQRRLQLVRGGQAEKLGEKERSELRKRKLLAEVTLKTYWVSKGSAFSTSISKQETELSPEMISSGSWRDRPFKPYNFLAHGVLPDSGHLHPLLKVRSQFRQIFLEMGFTEMPTDNFIESSFWNFDALFQPQQHPARDQHDTFFLRDPAEALQLPMDYVQRVKRTHSQGGYGSQGYKYNWKLDEARKNLLRTHTTSASARALYRLAQKKPFTPVKYFSIDRVFRNETLDATHLAEFHQIEGVVADHGLTLGHLMGVLREFFTKLGITQLRFKPAYNPYTEPSMEVFSYHQGLKKWVEVGNSGVFRPEMLLPMGLPENVSVIAWGLSLERPTMIKYGINNIRELVGHKVNLQMVYDSPLCRLDAEPRPPPTQEAA.

An N-acetylalanine modification is found at alanine 2. Threonine 190 is subject to Phosphothreonine. Serine 193 and serine 301 each carry phosphoserine. Lysine 311 is modified (N6-acetyllysine). L-phenylalanine contacts are provided by residues threonine 329, 372-374 (QIE), and tyrosine 412. Residue glutamate 414 participates in Mg(2+) binding. Residue phenylalanine 438 coordinates L-phenylalanine.

Belongs to the class-II aminoacyl-tRNA synthetase family. Phe-tRNA synthetase alpha subunit type 2 subfamily. Heterotetramer; dimer of two heterodimers formed by FARSA and FARSB.

Its subcellular location is the cytoplasm. The catalysed reaction is tRNA(Phe) + L-phenylalanine + ATP = L-phenylalanyl-tRNA(Phe) + AMP + diphosphate + H(+). The polypeptide is Phenylalanine--tRNA ligase alpha subunit (FARSA) (Homo sapiens (Human)).